A 200-amino-acid chain; its full sequence is HVA22-like protein k (200 aa).

Residues 176 to 200 (LGEIANGSPVSETNSDSESDSNHED) form a disordered region.

The protein belongs to the DP1 family.

The protein is HVA22-like protein k (HVA22K) of Arabidopsis thaliana (Mouse-ear cress).